The primary structure comprises 389 residues: Probable serine/threonine-protein kinase PBL11 (389 aa).

Residue glycine 2 is the site of N-myristoyl glycine attachment. Cysteine 4 is lipidated: S-palmitoyl cysteine. The Protein kinase domain occupies phenylalanine 68–leucine 353. Residues valine 74 to valine 82 and lysine 106 contribute to the ATP site. Phosphotyrosine is present on tyrosine 151. Aspartate 203 functions as the Proton acceptor in the catalytic mechanism. Serine 207 and serine 237 each carry phosphoserine. Phosphothreonine is present on residues threonine 238 and threonine 243. Residue tyrosine 251 is modified to Phosphotyrosine.

It belongs to the protein kinase superfamily. Ser/Thr protein kinase family. Roots, leaves and stems.

The protein localises to the cell membrane. It carries out the reaction L-seryl-[protein] + ATP = O-phospho-L-seryl-[protein] + ADP + H(+). The enzyme catalyses L-threonyl-[protein] + ATP = O-phospho-L-threonyl-[protein] + ADP + H(+). In terms of biological role, may play a role in the regulation of plant growth and development. May be involved in plant defense signaling. This chain is Probable serine/threonine-protein kinase PBL11, found in Arabidopsis thaliana (Mouse-ear cress).